Here is a 108-residue protein sequence, read N- to C-terminus: Protein Asterix (108 aa).

Residues Met-1–Asn-29 are disordered. Residues Val-80 to Leu-96 form a helical membrane-spanning segment.

It belongs to the Asterix family.

The protein resides in the membrane. The chain is Protein Asterix from Drosophila melanogaster (Fruit fly).